The primary structure comprises 244 residues: Phosphatidylinositol phosphate synthase (244 aa).

The next 3 helical transmembrane spans lie at 24–42 (YARA…FLIR), 49–66 (TVTL…LVFY), and 72–91 (FWGT…DGNM). Residue 48–51 (DTVT) coordinates a CDP-1,2-diacyl-sn-glycerol. Mg(2+)-binding residues include Asp-85 and Asp-88. Residues Gly-89, Arg-93, and Ser-99 each contribute to the a CDP-1,2-diacyl-sn-glycerol site. Residues Asp-106 and Asp-110 each coordinate Mg(2+). Asp-110 acts as the Proton acceptor in catalysis. Transmembrane regions (helical) follow at residues 117 to 137 (IFGG…LCAV), 174 to 190 (LVIS…HKFG), and 196 to 214 (VLLP…VTLI).

Belongs to the CDP-alcohol phosphatidyltransferase class-I family. As to quaternary structure, homodimer. Mg(2+) is required as a cofactor.

It is found in the cell membrane. The enzyme catalyses a CDP-1,2-diacyl-sn-glycerol + 1D-myo-inositol 3-phosphate = a 1,2-diacyl-sn-glycero-3-phospho-(1D-myo-inositol-3-phosphate) + CMP + H(+). It catalyses the reaction 1,2-di-(9Z-octadecenoyl)-sn-glycero-3-cytidine-5'-diphosphate + 1D-myo-inositol 3-phosphate = 1,2-di-(9Z-octadecenoyl)-sn-glycero-3-phospho-(1D-myo-inositol-3-phosphate) + CMP + H(+). It participates in phospholipid metabolism; phosphatidylinositol phosphate biosynthesis. Its function is as follows. Catalyzes the conjugation of the 1'-hydroxyl group of D-myo-inositol-3-phosphate (also named L-myo-inositol-1-phosphate) with a lipid tail of cytidine diphosphate diacylglycerol (CDP-DAG), forming phosphatidylinositol phosphate (PIP) and CMP. PIP is a precursor of phosphatidylinositol (PI) which is an essential lipid required for cell wall formation. This Streptomyces avermitilis (strain ATCC 31267 / DSM 46492 / JCM 5070 / NBRC 14893 / NCIMB 12804 / NRRL 8165 / MA-4680) protein is Phosphatidylinositol phosphate synthase.